Reading from the N-terminus, the 314-residue chain is Homoserine kinase (314 aa).

95 to 105 (PHSRGLGSSAA) is a binding site for ATP.

This sequence belongs to the GHMP kinase family. Homoserine kinase subfamily.

The protein resides in the cytoplasm. It carries out the reaction L-homoserine + ATP = O-phospho-L-homoserine + ADP + H(+). It functions in the pathway amino-acid biosynthesis; L-threonine biosynthesis; L-threonine from L-aspartate: step 4/5. Functionally, catalyzes the ATP-dependent phosphorylation of L-homoserine to L-homoserine phosphate. The polypeptide is Homoserine kinase (Mycolicibacterium vanbaalenii (strain DSM 7251 / JCM 13017 / BCRC 16820 / KCTC 9966 / NRRL B-24157 / PYR-1) (Mycobacterium vanbaalenii)).